Consider the following 79-residue polypeptide: RNA-binding protein Hfq (79 aa).

Residues Asp-10–Val-70 enclose the Sm domain.

This sequence belongs to the Hfq family. As to quaternary structure, homohexamer.

Functionally, RNA chaperone that binds small regulatory RNA (sRNAs) and mRNAs to facilitate mRNA translational regulation in response to envelope stress, environmental stress and changes in metabolite concentrations. Also binds with high specificity to tRNAs. This chain is RNA-binding protein Hfq, found in Bartonella henselae (strain ATCC 49882 / DSM 28221 / CCUG 30454 / Houston 1) (Rochalimaea henselae).